A 517-amino-acid polypeptide reads, in one-letter code: Cytochrome b mRNA maturase bI3 (517 aa).

Topologically, residues 1 to 31 (MAFRKSNVYLSLVNSYIIDSPQPSSINYWWN) are mitochondrial matrix. The segment at 1-169 (MAFRKSNVYL…DIVSWLWGGF (169 aa)) is cytochrome b. A helical membrane pass occupies residues 32 to 52 (MGSLLGLCLVIQIVTGIFMAM). At 53 to 84 (HYSSNIELAFSSVEHIMRDVHNGYILRYLHAN) the chain is on the mitochondrial intermembrane side. Residues 85–105 (GASFFFMVMFMHMAKGLYYGS) traverse the membrane as a helical segment. Residues 106-115 (YRSPRVTLWN) are Mitochondrial matrix-facing. A helical membrane pass occupies residues 116-136 (VGVIIFILTIATAFLGYCCVY). Residues 137–145 (GQMSHWGAT) lie on the Mitochondrial intermembrane side of the membrane. The chain crosses the membrane as a helical span at residues 146-166 (VITNLFSAIPFVGNDIVSWLW). The Mitochondrial matrix portion of the chain corresponds to 167–184 (GGFNMEDPYYSNMMLNKS). The maturase stretch occupies residues 170–517 (NMEDPYYSNM…NNYFKIPPKY (348 aa)). Residues 185–205 (VLCWNIFIWMMNYYIIQLIIY) form a helical membrane-spanning segment. Residues 206 to 224 (NNMIWNKNNMVKMFIMRRK) lie on the Mitochondrial intermembrane side of the membrane. A helical membrane pass occupies residues 225–242 (LAVINMYMYMKLIIQRTY). Topologically, residues 243–517 (SYYMNNTIIY…NNYFKIPPKY (275 aa)) are mitochondrial matrix.

This sequence in the N-terminal section; belongs to the cytochrome b family. In the C-terminal section; belongs to the LAGLIDADG endonuclease family. As to quaternary structure, forms a ribonucleoprotein complex composed of maturase bI3 and 2 dimers of MRS1 that assemble around the bI3 RNA.

The protein resides in the mitochondrion inner membrane. Functionally, mitochondrial mRNA maturase required for splicing of intron 3 of the cytochrome b (COB) gene, containing its own coding sequence. In vivo splicing requires the formation of a ribonucleoprotein complex together with the imported mitochondrial RNA-splicing protein MRS1. The complex seems to stimulate the intrinsic ribozyme activity of intron bI3 through binding to and stabilizing specific secondary and tertiary structure elements in the RNA. This is Cytochrome b mRNA maturase bI3 (BI3) from Saccharomyces cerevisiae (strain ATCC 204508 / S288c) (Baker's yeast).